A 206-amino-acid chain; its full sequence is Ribosomal RNA large subunit methyltransferase E (206 aa).

The S-adenosyl-L-methionine site is built by Gly-61, Trp-63, Asp-81, Asp-97, and Asp-122. Lys-162 (proton acceptor) is an active-site residue.

Belongs to the class I-like SAM-binding methyltransferase superfamily. RNA methyltransferase RlmE family.

It localises to the cytoplasm. The enzyme catalyses uridine(2552) in 23S rRNA + S-adenosyl-L-methionine = 2'-O-methyluridine(2552) in 23S rRNA + S-adenosyl-L-homocysteine + H(+). Functionally, specifically methylates the uridine in position 2552 of 23S rRNA at the 2'-O position of the ribose in the fully assembled 50S ribosomal subunit. This chain is Ribosomal RNA large subunit methyltransferase E, found in Neisseria meningitidis serogroup C / serotype 2a (strain ATCC 700532 / DSM 15464 / FAM18).